Reading from the N-terminus, the 301-residue chain is Probable DNA-directed RNA polymerase III subunit rpc6 (301 aa).

Belongs to the eukaryotic RPC34/RPC39 RNA polymerase subunit family. As to quaternary structure, component of the RNA polymerase III (Pol III) complex consisting of 17 subunits. Interacts with TFIIB.

It localises to the nucleus. DNA-dependent RNA polymerase catalyzes the transcription of DNA into RNA using the four ribonucleoside triphosphates as substrates. Specific peripheric component of RNA polymerase III which synthesizes small RNAs, such as 5S rRNA and tRNAs. The polypeptide is Probable DNA-directed RNA polymerase III subunit rpc6 (rpc6) (Schizosaccharomyces pombe (strain 972 / ATCC 24843) (Fission yeast)).